Reading from the N-terminus, the 260-residue chain is Global transcriptional regulator CodY (260 aa).

The segment at 1–159 (MPNLLQKTRK…SSTVVGIQLL (159 aa)) is GAF domain. The H-T-H motif DNA-binding region spans 207–226 (ASVIADRIGITRSVIVNALR).

Belongs to the CodY family.

It is found in the cytoplasm. Its function is as follows. DNA-binding global transcriptional regulator which is involved in the adaptive response to starvation and acts by directly or indirectly controlling the expression of numerous genes in response to nutrient availability. During rapid exponential growth, CodY is highly active and represses genes whose products allow adaptation to nutrient depletion. The chain is Global transcriptional regulator CodY from Streptococcus equi subsp. zooepidemicus (strain MGCS10565).